Consider the following 161-residue polypeptide: Prs ADP-ribosylating toxin (161 aa).

It belongs to the MbcT/ParT/Res family. In terms of assembly, homodimer, forms heterotetrameric ParS(2)-ParT(2) complexes. In terms of processing, consumes NAD(+) and auto-ADP-ribosylates on the tryptic fragment Ala-47-Arg-66 in vitro. Also auto-ADP-ribosylates using NADP(+).

Functionally, toxic component of a type II toxin-antitoxin (TA) system. Expression in E.coli inhibits cell growth; bacteriostasis is neutralized by expression of cognate antitoxin ParS. ADP-ribosylates E.coli ribose-phosphate pyrophosphokinase (RPPK, prs) using NAD(+) in vitro; ADP-ribosylates RPPK on 'Lys-182' and 'Ser-202'. Cannot use NADP(+). Also auto-ADP-ribosylates in vitro; in the presence of RPPK auto-ADP-ribosylation decreases. The polypeptide is Prs ADP-ribosylating toxin (Sphingobium sp. (strain YBL2)).